We begin with the raw amino-acid sequence, 90 residues long: Small ribosomal subunit protein uS17 (90 aa).

It belongs to the universal ribosomal protein uS17 family. In terms of assembly, part of the 30S ribosomal subunit.

Its function is as follows. One of the primary rRNA binding proteins, it binds specifically to the 5'-end of 16S ribosomal RNA. The chain is Small ribosomal subunit protein uS17 from Paraburkholderia phytofirmans (strain DSM 17436 / LMG 22146 / PsJN) (Burkholderia phytofirmans).